We begin with the raw amino-acid sequence, 100 residues long: Integration host factor subunit beta (100 aa).

This sequence belongs to the bacterial histone-like protein family. As to quaternary structure, heterodimer of an alpha and a beta chain.

Functionally, this protein is one of the two subunits of integration host factor, a specific DNA-binding protein that functions in genetic recombination as well as in transcriptional and translational control. The protein is Integration host factor subunit beta of Agrobacterium fabrum (strain C58 / ATCC 33970) (Agrobacterium tumefaciens (strain C58)).